We begin with the raw amino-acid sequence, 242 residues long: Adapter protein MecA (242 aa).

This sequence belongs to the MecA family. As to quaternary structure, homodimer.

In terms of biological role, enables the recognition and targeting of unfolded and aggregated proteins to the ClpC protease or to other proteins involved in proteolysis. The polypeptide is Adapter protein MecA (Streptococcus gordonii (strain Challis / ATCC 35105 / BCRC 15272 / CH1 / DL1 / V288)).